A 193-amino-acid chain; its full sequence is ATP-dependent Clp protease proteolytic subunit (193 aa).

Serine 98 functions as the Nucleophile in the catalytic mechanism. Histidine 123 is an active-site residue.

The protein belongs to the peptidase S14 family. As to quaternary structure, fourteen ClpP subunits assemble into 2 heptameric rings which stack back to back to give a disk-like structure with a central cavity, resembling the structure of eukaryotic proteasomes.

The protein resides in the cytoplasm. The enzyme catalyses Hydrolysis of proteins to small peptides in the presence of ATP and magnesium. alpha-casein is the usual test substrate. In the absence of ATP, only oligopeptides shorter than five residues are hydrolyzed (such as succinyl-Leu-Tyr-|-NHMec, and Leu-Tyr-Leu-|-Tyr-Trp, in which cleavage of the -Tyr-|-Leu- and -Tyr-|-Trp bonds also occurs).. Functionally, cleaves peptides in various proteins in a process that requires ATP hydrolysis. Has a chymotrypsin-like activity. Plays a major role in the degradation of misfolded proteins. ClpXP is involved in the complete degradation of the Site-2 clipped anti-sigma-W factor RsiW. This results in the release of SigW and the transcription activation of the genes under the control of the sigma-W factor. The polypeptide is ATP-dependent Clp protease proteolytic subunit (Oceanobacillus iheyensis (strain DSM 14371 / CIP 107618 / JCM 11309 / KCTC 3954 / HTE831)).